We begin with the raw amino-acid sequence, 151 residues long: Small ribosomal subunit protein uS11 (151 aa).

Residues 129–151 (IEDVTPVPSDSTRRKGGRRGRRL) are disordered. The span at 142–151 (RKGGRRGRRL) shows a compositional bias: basic residues.

It belongs to the universal ribosomal protein uS11 family.

This Procambarus clarkii (Red swamp crayfish) protein is Small ribosomal subunit protein uS11 (RPS14).